We begin with the raw amino-acid sequence, 106 residues long: Large ribosomal subunit protein uL24 (106 aa).

It belongs to the universal ribosomal protein uL24 family. Part of the 50S ribosomal subunit.

Its function is as follows. One of two assembly initiator proteins, it binds directly to the 5'-end of the 23S rRNA, where it nucleates assembly of the 50S subunit. Functionally, one of the proteins that surrounds the polypeptide exit tunnel on the outside of the subunit. The protein is Large ribosomal subunit protein uL24 of Erythrobacter litoralis (strain HTCC2594).